The sequence spans 190 residues: Imidazoleglycerol-phosphate dehydratase (190 aa).

The protein belongs to the imidazoleglycerol-phosphate dehydratase family.

It is found in the cytoplasm. The catalysed reaction is D-erythro-1-(imidazol-4-yl)glycerol 3-phosphate = 3-(imidazol-4-yl)-2-oxopropyl phosphate + H2O. It functions in the pathway amino-acid biosynthesis; L-histidine biosynthesis; L-histidine from 5-phospho-alpha-D-ribose 1-diphosphate: step 6/9. This is Imidazoleglycerol-phosphate dehydratase from Campylobacter hominis (strain ATCC BAA-381 / DSM 21671 / CCUG 45161 / LMG 19568 / NCTC 13146 / CH001A).